The primary structure comprises 137 residues: Small ribosomal subunit protein bS6 (137 aa).

The segment at 104-137 is disordered; sequence SLVNKANNKPEPKPTKAKKEDVAPEAKEQAQTEA. A compositionally biased stretch (basic and acidic residues) spans 111 to 137; that stretch reads NKPEPKPTKAKKEDVAPEAKEQAQTEA.

Belongs to the bacterial ribosomal protein bS6 family.

In terms of biological role, binds together with bS18 to 16S ribosomal RNA. This Helicobacter hepaticus (strain ATCC 51449 / 3B1) protein is Small ribosomal subunit protein bS6.